A 96-amino-acid chain; its full sequence is Large ribosomal subunit protein eL14 (96 aa).

This sequence belongs to the eukaryotic ribosomal protein eL14 family.

The protein is Large ribosomal subunit protein eL14 of Staphylothermus marinus (strain ATCC 43588 / DSM 3639 / JCM 9404 / F1).